The primary structure comprises 251 residues: Cell division protein ZapD (251 aa).

It belongs to the ZapD family. Interacts with FtsZ.

It localises to the cytoplasm. Its function is as follows. Cell division factor that enhances FtsZ-ring assembly. Directly interacts with FtsZ and promotes bundling of FtsZ protofilaments, with a reduction in FtsZ GTPase activity. In Paraburkholderia phytofirmans (strain DSM 17436 / LMG 22146 / PsJN) (Burkholderia phytofirmans), this protein is Cell division protein ZapD.